A 1084-amino-acid polypeptide reads, in one-letter code: AP-3 complex subunit beta-1 (1084 aa).

Polar residues predominate over residues 1–11 (MSSNSFAYNEQ). Residues 1-26 (MSSNSFAYNEQSGGGEATELGQEATS) form a disordered region. 2 positions are modified to phosphoserine: Ser-276 and Ser-609. The disordered stretch occupies residues 663–800 (AGKAKKENPD…KEKKTKQERN (138 aa)). Positions 666–677 (AKKENPDKKFYS) are enriched in basic and acidic residues. Over residues 678-717 (ESEEEEDSSESSSDSESESGSESGEDEEDDRSGDSAEDSG) the composition is skewed to acidic residues. The span at 718–729 (ESGSEPEAGKGR) shows a compositional bias: low complexity. Basic and acidic residues predominate over residues 738–753 (GRGDSKDVDKEKENSK). A Phosphoserine modification is found at Ser-742. Low complexity predominate over residues 754–767 (TSESSSGESSSIEE). Residues 768–781 (SSSDSESESESESE) show a composition bias toward acidic residues. The segment covering 782–800 (SESRKVTKEKEKKTKQERN) has biased composition (basic and acidic residues).

This sequence belongs to the adaptor complexes large subunit family. Adaptor protein complex 3 (AP-3) is a heterotetramer composed of two large adaptins (delta-type subunit AP3D1 and beta-type subunit AP3B1 or AP3B2), a medium adaptin (mu-type subunit AP3M1 or AP3M2) and a small adaptin (sigma-type subunit APS1 or AP3S2). AP-3 associates with the BLOC-1 complex. Interacts with KIF3A; interaction is direct; interaction is impaired by pyrophosphorylation of AP3B1. In terms of processing, phosphorylated on serine residues. Post-translationally, pyrophosphorylation by 5-diphosphoinositol pentakisphosphate (5-IP7) impairs interaction with KIF3A. Serine pyrophosphorylation is achieved by Mg(2+)-dependent, but enzyme independent transfer of a beta-phosphate from a inositol pyrophosphate to a pre-phosphorylated serine residue.

The protein localises to the cytoplasmic vesicle. It localises to the clathrin-coated vesicle membrane. Its subcellular location is the golgi apparatus. Functionally, subunit of non-clathrin- and clathrin-associated adaptor protein complex 3 (AP-3) that plays a role in protein sorting in the late-Golgi/trans-Golgi network (TGN) and/or endosomes. The AP complexes mediate both the recruitment of clathrin to membranes and the recognition of sorting signals within the cytosolic tails of transmembrane cargo molecules. AP-3 appears to be involved in the sorting of a subset of transmembrane proteins targeted to lysosomes and lysosome-related organelles. In concert with the BLOC-1 complex, AP-3 is required to target cargos into vesicles assembled at cell bodies for delivery into neurites and nerve terminals. This Bos taurus (Bovine) protein is AP-3 complex subunit beta-1 (AP3B1).